The following is a 250-amino-acid chain: Cell division protein ZapD (250 aa).

Belongs to the ZapD family. In terms of assembly, interacts with FtsZ.

Its subcellular location is the cytoplasm. Cell division factor that enhances FtsZ-ring assembly. Directly interacts with FtsZ and promotes bundling of FtsZ protofilaments, with a reduction in FtsZ GTPase activity. The protein is Cell division protein ZapD of Bordetella petrii (strain ATCC BAA-461 / DSM 12804 / CCUG 43448).